The chain runs to 411 residues: Secretion apparatus protein BsaZ (411 aa).

Helical transmembrane passes span 28–48, 80–100, 137–157, and 175–195; these read IVAL…VDLT, IAAP…LVQS, ALLY…LYHA, and IVLT…VLIL. Residues 341–411 form a disordered region; the sequence is AANRGGPPPE…APARTGDQNA (71 aa). Residues 370 to 404 are compositionally biased toward low complexity; it reads DACADNAFPDDAPPGAAAPNAGSPDGPAPDGGAPA.

Belongs to the type III secretion exporter family.

The protein resides in the cell membrane. Its function is as follows. Part of the bsa type III secretion system, is involved in the intracellular replication of invading bacteria inside the host cell. Probably necessary for the lysis of the vacuole membrane and escape into the host cell cytoplasm. This Burkholderia pseudomallei (strain K96243) protein is Secretion apparatus protein BsaZ (bsaZ).